The primary structure comprises 497 residues: Aspartyl/glutamyl-tRNA(Asn/Gln) amidotransferase subunit B (497 aa).

It belongs to the GatB/GatE family. GatB subfamily. As to quaternary structure, heterotrimer of A, B and C subunits.

The catalysed reaction is L-glutamyl-tRNA(Gln) + L-glutamine + ATP + H2O = L-glutaminyl-tRNA(Gln) + L-glutamate + ADP + phosphate + H(+). It carries out the reaction L-aspartyl-tRNA(Asn) + L-glutamine + ATP + H2O = L-asparaginyl-tRNA(Asn) + L-glutamate + ADP + phosphate + 2 H(+). Functionally, allows the formation of correctly charged Asn-tRNA(Asn) or Gln-tRNA(Gln) through the transamidation of misacylated Asp-tRNA(Asn) or Glu-tRNA(Gln) in organisms which lack either or both of asparaginyl-tRNA or glutaminyl-tRNA synthetases. The reaction takes place in the presence of glutamine and ATP through an activated phospho-Asp-tRNA(Asn) or phospho-Glu-tRNA(Gln). This Cutibacterium acnes (strain DSM 16379 / KPA171202) (Propionibacterium acnes) protein is Aspartyl/glutamyl-tRNA(Asn/Gln) amidotransferase subunit B.